A 279-amino-acid polypeptide reads, in one-letter code: Probable endonuclease 4 (279 aa).

9 residues coordinate Zn(2+): H74, H112, E147, D180, H183, H214, D227, H229, and E259.

The protein belongs to the AP endonuclease 2 family. The cofactor is Zn(2+).

The enzyme catalyses Endonucleolytic cleavage to 5'-phosphooligonucleotide end-products.. Its function is as follows. Endonuclease IV plays a role in DNA repair. It cleaves phosphodiester bonds at apurinic or apyrimidinic (AP) sites, generating a 3'-hydroxyl group and a 5'-terminal sugar phosphate. This chain is Probable endonuclease 4, found in Mycoplasma mobile (strain ATCC 43663 / 163K / NCTC 11711) (Mesomycoplasma mobile).